The chain runs to 156 residues: S-ribosylhomocysteine lyase (156 aa).

Fe cation contacts are provided by His-56, His-60, and Cys-123.

Belongs to the LuxS family. As to quaternary structure, homodimer. Fe cation serves as cofactor.

It carries out the reaction S-(5-deoxy-D-ribos-5-yl)-L-homocysteine = (S)-4,5-dihydroxypentane-2,3-dione + L-homocysteine. Involved in the synthesis of autoinducer 2 (AI-2) which is secreted by bacteria and is used to communicate both the cell density and the metabolic potential of the environment. The regulation of gene expression in response to changes in cell density is called quorum sensing. Catalyzes the transformation of S-ribosylhomocysteine (RHC) to homocysteine (HC) and 4,5-dihydroxy-2,3-pentadione (DPD). The sequence is that of S-ribosylhomocysteine lyase from Staphylococcus epidermidis (strain ATCC 35984 / DSM 28319 / BCRC 17069 / CCUG 31568 / BM 3577 / RP62A).